We begin with the raw amino-acid sequence, 120 residues long: Large ribosomal subunit protein bL12 (120 aa).

Belongs to the bacterial ribosomal protein bL12 family. As to quaternary structure, homodimer. Part of the ribosomal stalk of the 50S ribosomal subunit. Forms a multimeric L10(L12)X complex, where L10 forms an elongated spine to which 2 to 4 L12 dimers bind in a sequential fashion. Binds GTP-bound translation factors.

In terms of biological role, forms part of the ribosomal stalk which helps the ribosome interact with GTP-bound translation factors. Is thus essential for accurate translation. The polypeptide is Large ribosomal subunit protein bL12 (Lachnoclostridium phytofermentans (strain ATCC 700394 / DSM 18823 / ISDg) (Clostridium phytofermentans)).